The primary structure comprises 550 residues: GMP synthase [glutamine-hydrolyzing] (550 aa).

The 194-residue stretch at 39 to 232 (RILILDFGSQ…VHKICGCGGL (194 aa)) folds into the Glutamine amidotransferase type-1 domain. The active-site Nucleophile is the Cys116. Catalysis depends on residues His206 and Glu208. A GMPS ATP-PPase domain is found at 233 to 425 (WTPEHIIDLR…LGLPHSMIYR (193 aa)). 260–266 (SGGVDSS) serves as a coordination point for ATP.

As to quaternary structure, homodimer.

It carries out the reaction XMP + L-glutamine + ATP + H2O = GMP + L-glutamate + AMP + diphosphate + 2 H(+). It participates in purine metabolism; GMP biosynthesis; GMP from XMP (L-Gln route): step 1/1. In terms of biological role, catalyzes the synthesis of GMP from XMP. The protein is GMP synthase [glutamine-hydrolyzing] of Acinetobacter baylyi (strain ATCC 33305 / BD413 / ADP1).